Here is a 635-residue protein sequence, read N- to C-terminus: Dihydrolipoyllysine-residue acetyltransferase component of pyruvate dehydrogenase complex, mitochondrial (635 aa).

The region spanning 83 to 160 (GKEITMPALS…EINKPIAIIV (78 aa)) is the Lipoyl-binding 1 domain. An N6-lipoyllysine modification is found at lysine 124. Residues 171 to 204 (KNYKPSSQASSTPVQEEAPKPKQEAPKKSTKTYP) are disordered. The span at 174–184 (KPSSQASSTPV) shows a compositional bias: polar residues. Basic and acidic residues predominate over residues 187–197 (EAPKPKQEAPK). The Lipoyl-binding 2 domain maps to 206 to 283 (HKVVGMPALS…QINQPVCIIV (78 aa)). Lysine 247 bears the N6-lipoyllysine mark. A disordered region spans residues 295–338 (YSVEEQSSSSSSSSQESTPSSSSSSSQESTPSQSSSQQTTRKSG). Low complexity predominate over residues 298–334 (EEQSSSSSSSSQESTPSSSSSSSQESTPSQSSSQQTT). In terms of domain architecture, Peripheral subunit-binding (PSBD) spans 342-379 (FATPAARFEASSKGYDLSAINGTGPNNRILKADVLEFV). The interval 382–413 (KQEVAQQQQQQTTTTTKKPTTPTSSGEFTDIP) is disordered. Low complexity predominate over residues 387 to 404 (QQQQQQTTTTTKKPTTPT). A catalytic region spans residues 403–635 (PTSSGEFTDI…YVENPIKLIL (233 aa)).

Belongs to the 2-oxoacid dehydrogenase family. In terms of assembly, 20 to 30 alpha(2)-beta(2) tetramers of E1 + 6 homodimers of E3 + 60 copies of E2. The cofactor is (R)-lipoate.

It is found in the mitochondrion matrix. The catalysed reaction is N(6)-[(R)-dihydrolipoyl]-L-lysyl-[protein] + acetyl-CoA = N(6)-[(R)-S(8)-acetyldihydrolipoyl]-L-lysyl-[protein] + CoA. Functionally, the pyruvate dehydrogenase complex catalyzes the overall conversion of pyruvate to acetyl-CoA and CO(2). It contains multiple copies of three enzymatic components: pyruvate dehydrogenase (E1), dihydrolipoamide acetyltransferase (E2) and lipoamide dehydrogenase (E3). In Dictyostelium discoideum (Social amoeba), this protein is Dihydrolipoyllysine-residue acetyltransferase component of pyruvate dehydrogenase complex, mitochondrial (pdhC).